Here is a 182-residue protein sequence, read N- to C-terminus: NADH-quinone oxidoreductase subunit I (182 aa).

2 consecutive 4Fe-4S ferredoxin-type domains span residues 52–82 and 92–121; these read LTRD…LQKA and DFFR…LTPD. 8 residues coordinate [4Fe-4S] cluster: cysteine 62, cysteine 65, cysteine 68, cysteine 72, cysteine 101, cysteine 104, cysteine 107, and cysteine 111.

It belongs to the complex I 23 kDa subunit family. As to quaternary structure, NDH-1 is composed of 13 different subunits. Subunits NuoA, H, J, K, L, M, N constitute the membrane sector of the complex. [4Fe-4S] cluster is required as a cofactor.

The protein resides in the cell inner membrane. It carries out the reaction a quinone + NADH + 5 H(+)(in) = a quinol + NAD(+) + 4 H(+)(out). NDH-1 shuttles electrons from NADH, via FMN and iron-sulfur (Fe-S) centers, to quinones in the respiratory chain. The immediate electron acceptor for the enzyme in this species is believed to be ubiquinone. Couples the redox reaction to proton translocation (for every two electrons transferred, four hydrogen ions are translocated across the cytoplasmic membrane), and thus conserves the redox energy in a proton gradient. The polypeptide is NADH-quinone oxidoreductase subunit I (Pseudomonas syringae pv. syringae (strain B728a)).